A 274-amino-acid chain; its full sequence is Large ribosomal subunit protein uL2 (274 aa).

The segment at 223 to 256 is disordered; that stretch reads VAMNPVDHPHGGGEGRTSGGRHPVTPWGIPTKGY.

The protein belongs to the universal ribosomal protein uL2 family. In terms of assembly, part of the 50S ribosomal subunit. Forms a bridge to the 30S subunit in the 70S ribosome.

Functionally, one of the primary rRNA binding proteins. Required for association of the 30S and 50S subunits to form the 70S ribosome, for tRNA binding and peptide bond formation. It has been suggested to have peptidyltransferase activity; this is somewhat controversial. Makes several contacts with the 16S rRNA in the 70S ribosome. The sequence is that of Large ribosomal subunit protein uL2 from Trichlorobacter lovleyi (strain ATCC BAA-1151 / DSM 17278 / SZ) (Geobacter lovleyi).